Consider the following 320-residue polypeptide: MIKKIGVLTSGGDAPGMNAAIRGVVRTALGAGLEVYGIYDGYLGLYEGRIKQLDRSSVSDVINRGGTFLGSARFPEFKEVAVREKAIENLKAHGIDALVVIGGDGSYMGAKKLTEMGYPCIGLPGTIDNDIAGTDYTIGYLTALNTVIESIDRLRDTSSSHQRISIVEIMGRHCGDLTLMSAIAGGCEYIITPETGLDKEKLIGNIQDGISKGKKHAIIALTELMMDANELAKEIEAGTGRETRATVLGHIQRGGRPTAFDRVLASRMGNYAVHLLMEGHGGRCVGIVKEQLVHHDIIDAIENMKRPVRNDLFKVAEELF.

Gly-12 contributes to the ATP binding site. Residue 22–26 participates in ADP binding; the sequence is RGVVR. ATP is bound by residues 73–74 and 103–106; these read RF and GDGS. Asp-104 is a binding site for Mg(2+). 126 to 128 lines the substrate pocket; sequence TID. Catalysis depends on Asp-128, which acts as the Proton acceptor. Arg-155 is an ADP binding site. Substrate-binding positions include Arg-163 and 170 to 172; that span reads MGR. ADP-binding positions include 186 to 188, Lys-212, and 214 to 216; these read GCE and KKH. Substrate is bound by residues Glu-223, Arg-244, and 250 to 253; that span reads HIQR.

It belongs to the phosphofructokinase type A (PFKA) family. ATP-dependent PFK group I subfamily. Prokaryotic clade 'B1' sub-subfamily. Homotetramer. The cofactor is Mg(2+).

It is found in the cytoplasm. It catalyses the reaction beta-D-fructose 6-phosphate + ATP = beta-D-fructose 1,6-bisphosphate + ADP + H(+). It participates in carbohydrate degradation; glycolysis; D-glyceraldehyde 3-phosphate and glycerone phosphate from D-glucose: step 3/4. Its activity is regulated as follows. Allosterically activated by ADP and other diphosphonucleosides, and allosterically inhibited by phosphoenolpyruvate. Functionally, catalyzes the phosphorylation of D-fructose 6-phosphate to fructose 1,6-bisphosphate by ATP, the first committing step of glycolysis. This is ATP-dependent 6-phosphofructokinase from Vibrio vulnificus (strain CMCP6).